Here is a 37-residue protein sequence, read N- to C-terminus: Photosystem I reaction center subunit VIII (37 aa).

A helical membrane pass occupies residues 7–27; sequence LPSIFVPLVGLVFPAIAMASL.

This sequence belongs to the PsaI family.

The protein localises to the plastid. It localises to the chloroplast thylakoid membrane. In terms of biological role, may help in the organization of the PsaL subunit. The protein is Photosystem I reaction center subunit VIII of Populus alba (White poplar).